Here is a 282-residue protein sequence, read N- to C-terminus: MKVISSIQELRDQLRGQNRAAFVPTMGNLHEGHLSLMRLARQHGDPVVASIFVNRLQFGPNEDFDKYPRTLQEDIEKLQSEGVYVLFAPSERDMYPEPQEYRVEPPHDLGDILEGEFRPGFFKGVCTVVMKLFSCAQPRVAVFGKKDYQQLMIVRRMVQQFALPIDIVPAETVRAEDGLALSSRNRYLSPDERAEAPVLYRTLHDVRDTVLGGDRASADLLAVEARARAALEQRGWKPDYVAIRKRVDLQAPTREEFLAGEPLVILTAAKLGATRLIDNLEI.

26–33 (MGNLHEGH) contacts ATP. The active-site Proton donor is His-33. Gln-57 lines the (R)-pantoate pocket. Gln-57 is a beta-alanine binding site. An ATP-binding site is contributed by 144–147 (GKKD). Gln-150 is a binding site for (R)-pantoate. ATP is bound by residues Val-173 and 181 to 184 (LSSR).

The protein belongs to the pantothenate synthetase family. As to quaternary structure, homodimer.

It localises to the cytoplasm. It carries out the reaction (R)-pantoate + beta-alanine + ATP = (R)-pantothenate + AMP + diphosphate + H(+). Its pathway is cofactor biosynthesis; (R)-pantothenate biosynthesis; (R)-pantothenate from (R)-pantoate and beta-alanine: step 1/1. Catalyzes the condensation of pantoate with beta-alanine in an ATP-dependent reaction via a pantoyl-adenylate intermediate. The sequence is that of Pantothenate synthetase from Cupriavidus taiwanensis (strain DSM 17343 / BCRC 17206 / CCUG 44338 / CIP 107171 / LMG 19424 / R1) (Ralstonia taiwanensis (strain LMG 19424)).